We begin with the raw amino-acid sequence, 609 residues long: Albumin (609 aa).

The N-terminal stretch at 1-18 (MKWVTFISLLFLFSSAYS) is a signal peptide. Positions 19–24 (RGVFRR) are excised as a propeptide. Albumin domains lie at 19–210 (RGVF…DELR), 211–403 (DEGK…EFKP), and 404–601 (LVEE…KLVA). Histidine 27 contacts Cu cation. Position 29 is a phosphoserine; by FAM20C (serine 29). Glutamate 30 is a binding site for Ca(2+). The N-linked (Glc) (glycation) lysine glycan is linked to lysine 36. Aspartate 37 serves as a coordination point for Ca(2+). Lysine 75 carries an N-linked (Glc) (glycation) lysine; in vitro glycan. Residues cysteine 77 and cysteine 86 are joined by a disulfide bond. Phosphoserine; by FAM20C is present on residues serine 82 and serine 89. Residue histidine 91 coordinates Zn(2+). 4 cysteine pairs are disulfide-bonded: cysteine 99-cysteine 115, cysteine 114-cysteine 125, cysteine 148-cysteine 193, and cysteine 192-cysteine 201. Threonine 107 is subject to Phosphothreonine; by FAM20C. N-linked (Glc) (glycation) lysine; in vitro glycosylation is found at lysine 161 and lysine 186. N-linked (Glc) (glycation) lysine; in vitro glycosylation is present at lysine 223. Intrachain disulfides connect cysteine 224–cysteine 270 and cysteine 269–cysteine 277. At lysine 229 the chain carries N6-succinyllysine. A glycan (N-linked (Glc) (glycation) lysine; in vitro) is linked at lysine 249. Lysine 257 carries N-linked (Glc) (glycation) lysine glycosylation. Lysine 264 serves as a coordination point for (4Z,15Z)-bilirubin IXalpha. Glutamate 268 provides a ligand contact to Ca(2+). Zn(2+) contacts are provided by histidine 271 and aspartate 273. The Ca(2+) site is built by aspartate 273, glutamate 276, aspartate 279, and aspartate 283. 2 disulfide bridges follow: cysteine 289–cysteine 303 and cysteine 302–cysteine 313. Phosphoserine is present on serine 297. The N-linked (Glc) (glycation) lysine; in vitro glycan is linked to lysine 300. Lysine 305 carries an N-linked (Glc) (glycation) lysine glycan. The N-linked (Glc) (glycation) lysine; in vitro glycan is linked to lysine 337. Cystine bridges form between cysteine 340–cysteine 385 and cysteine 384–cysteine 393. Lysine 341 carries an N-linked (Glc) (glycation) lysine glycan. Residue asparagine 342 is glycosylated (N-linked (GlcNAc...) asparagine; in variant Redhill). A glycan (N-linked (Glc) (glycation) lysine; in vitro) is linked at lysine 347. Lysine 375 carries an N-linked (Glc) (glycation) lysine glycan. Lysine 402 and lysine 437 each carry an N-linked (Glc) (glycation) lysine; in vitro glycan. 4 cysteine pairs are disulfide-bonded: cysteine 416–cysteine 462, cysteine 461–cysteine 472, cysteine 485–cysteine 501, and cysteine 500–cysteine 511. At serine 443 the chain carries Phosphoserine. Residues threonine 444 and threonine 446 each carry the phosphothreonine modification. The residue at position 460 (lysine 460) is an N6-succinyllysine. N-linked (Glc) (glycation) lysine glycosylation occurs at lysine 463. Residue lysine 468 is glycosylated (N-linked (Glc) (glycation) lysine; in vitro). Phosphoserine is present on serine 513. N-linked (GlcNAc...) asparagine; in variant Casebrook glycosylation occurs at aspartate 518. 2 disulfides stabilise this stretch: cysteine 538–cysteine 583 and cysteine 582–cysteine 591. N6-succinyllysine is present on lysine 543. Lysine 549 carries an N-linked (Glc) (glycation) lysine glycan. At lysine 558 the chain carries N6-methyllysine; alternate. N-linked (Glc) (glycation) lysine; alternate glycosylation occurs at lysine 558. Residues lysine 560 and lysine 569 are each glycosylated (N-linked (Glc) (glycation) lysine; in vitro). N6-succinyllysine is present on lysine 588. N-linked (Glc) (glycation) lysine; in vitro glycosylation occurs at lysine 597.

Belongs to the ALB/AFP/VDB family. Interacts with FCGRT; this interaction regulates ALB homeostasis. Interacts with TASOR. In plasma, occurs in a covalently-linked complex with chromophore-bound alpha-1-microglobulin with molar ratio 1:2 and 1:1; this interaction does not prevent fatty acid binding to ALB. Kenitra variant is partially O-glycosylated at Thr-620. It has two new disulfide bonds Cys-600 to Cys-602 and Cys-601 to Cys-606. Post-translationally, glycated in diabetic patients. In terms of processing, phosphorylated by FAM20C in the extracellular medium. Acetylated on Lys-223 by acetylsalicylic acid. In terms of tissue distribution, plasma.

The protein localises to the secreted. Functionally, binds water, Ca(2+), Na(+), K(+), fatty acids, hormones, bilirubin and drugs. Its main function is the regulation of the colloidal osmotic pressure of blood. Major zinc transporter in plasma, typically binds about 80% of all plasma zinc. Major calcium and magnesium transporter in plasma, binds approximately 45% of circulating calcium and magnesium in plasma. Potentially has more than two calcium-binding sites and might additionally bind calcium in a non-specific manner. The shared binding site between zinc and calcium at residue Asp-273 suggests a crosstalk between zinc and calcium transport in the blood. The rank order of affinity is zinc &gt; calcium &gt; magnesium. Binds to the bacterial siderophore enterobactin and inhibits enterobactin-mediated iron uptake of E.coli from ferric transferrin, and may thereby limit the utilization of iron and growth of enteric bacteria such as E.coli. Does not prevent iron uptake by the bacterial siderophore aerobactin. The protein is Albumin (ALB) of Homo sapiens (Human).